The following is a 231-amino-acid chain: Ribonuclease 3 (231 aa).

The region spanning 5-134 (QEKLKNDYGL…FLGALFIDQG (130 aa)) is the RNase III domain. Glu47 contacts Mg(2+). Residue Asp51 is part of the active site. Residues Asn120 and Glu123 each contribute to the Mg(2+) site. Glu123 is an active-site residue. In terms of domain architecture, DRBM spans 160–229 (DYKTELQEVL…AENAIKGQNH (70 aa)).

The protein belongs to the ribonuclease III family. As to quaternary structure, homodimer. The cofactor is Mg(2+).

The protein localises to the cytoplasm. It carries out the reaction Endonucleolytic cleavage to 5'-phosphomonoester.. Its function is as follows. Digests double-stranded RNA. Involved in the processing of primary rRNA transcript to yield the immediate precursors to the large and small rRNAs (23S and 16S). Processes some mRNAs, and tRNAs when they are encoded in the rRNA operon. Processes pre-crRNA and tracrRNA of type II CRISPR loci if present in the organism. In Lactococcus lactis subsp. cremoris (strain SK11), this protein is Ribonuclease 3.